Reading from the N-terminus, the 65-residue chain is Large ribosomal subunit protein uL29 (65 aa).

Belongs to the universal ribosomal protein uL29 family.

The chain is Large ribosomal subunit protein uL29 from Lactobacillus helveticus (strain DPC 4571).